We begin with the raw amino-acid sequence, 102 residues long: Small ribosomal subunit protein uS10 (102 aa).

This sequence belongs to the universal ribosomal protein uS10 family. As to quaternary structure, part of the 30S ribosomal subunit.

Functionally, involved in the binding of tRNA to the ribosomes. This chain is Small ribosomal subunit protein uS10, found in Leuconostoc citreum (strain KM20).